The primary structure comprises 202 residues: ATP-dependent Clp protease proteolytic subunit (202 aa).

Residue Ser98 is the Nucleophile of the active site. His123 is an active-site residue.

Belongs to the peptidase S14 family. Fourteen ClpP subunits assemble into 2 heptameric rings which stack back to back to give a disk-like structure with a central cavity, resembling the structure of eukaryotic proteasomes.

It localises to the cytoplasm. It catalyses the reaction Hydrolysis of proteins to small peptides in the presence of ATP and magnesium. alpha-casein is the usual test substrate. In the absence of ATP, only oligopeptides shorter than five residues are hydrolyzed (such as succinyl-Leu-Tyr-|-NHMec, and Leu-Tyr-Leu-|-Tyr-Trp, in which cleavage of the -Tyr-|-Leu- and -Tyr-|-Trp bonds also occurs).. In terms of biological role, cleaves peptides in various proteins in a process that requires ATP hydrolysis. Has a chymotrypsin-like activity. Plays a major role in the degradation of misfolded proteins. The sequence is that of ATP-dependent Clp protease proteolytic subunit from Syntrophobacter fumaroxidans (strain DSM 10017 / MPOB).